The sequence spans 61 residues: uncharacterized protein (61 aa).

This is an uncharacterized protein from Saccharomyces cerevisiae (strain ATCC 204508 / S288c) (Baker's yeast).